We begin with the raw amino-acid sequence, 390 residues long: GTPase Obg (390 aa).

The 159-residue stretch at 1–159 (MKFVDEASIL…RELLLELMLL (159 aa)) folds into the Obg domain. Residues 127 to 147 (NTRFKSSVNRTPRQKTNGTPG) form a disordered region. Residues 129–145 (RFKSSVNRTPRQKTNGT) show a composition bias toward polar residues. The OBG-type G domain occupies 160–333 (ADVGMLGMPN…LCWDVMTFIL (174 aa)). GTP-binding positions include 166 to 173 (GMPNAGKS), 191 to 195 (FTTLV), 213 to 216 (DIPG), 283 to 286 (NKID), and 314 to 316 (SAA). Positions 173 and 193 each coordinate Mg(2+).

The protein belongs to the TRAFAC class OBG-HflX-like GTPase superfamily. OBG GTPase family. Monomer. It depends on Mg(2+) as a cofactor.

It localises to the cytoplasm. Its function is as follows. An essential GTPase which binds GTP, GDP and possibly (p)ppGpp with moderate affinity, with high nucleotide exchange rates and a fairly low GTP hydrolysis rate. Plays a role in control of the cell cycle, stress response, ribosome biogenesis and in those bacteria that undergo differentiation, in morphogenesis control. This Shigella sonnei (strain Ss046) protein is GTPase Obg.